The sequence spans 942 residues: Apolipoprotein B receptor (942 aa).

Disordered regions lie at residues 66 to 212 (GLRS…VTED), 240 to 269 (ERMV…QAML), 283 to 487 (DSLG…SPER), 501 to 607 (AGPE…VPWE), and 671 to 942 (EGRG…PKPQ). Basic and acidic residues-rich tracts occupy residues 106-123 (QAER…DARG), 132-143 (PEAEPGTHRDRS), 240-252 (ERMV…ERAR), 312-330 (EADK…EAEV), and 338-352 (EAER…HIAE). Over residues 353-370 (EEAMGEQETEGSFEDEER) the composition is skewed to acidic residues. S364 carries the phosphoserine modification. Residues 384 to 397 (EEVRAEESSREKRN) show a composition bias toward basic and acidic residues. Positions 415–425 (PDWEDSPEVST) are enriched in acidic residues. 2 stretches are compositionally biased toward basic and acidic residues: residues 444 to 458 (LRVK…ELVR) and 466 to 475 (QLEEGQKGQE). Phosphoserine occurs at positions 484 and 520. Basic and acidic residues-rich tracts occupy residues 514–531 (GVDR…EAGK) and 672–687 (GRGE…ETTE). The span at 709–721 (QEIDGTEEGEQAE) shows a compositional bias: acidic residues. Over residues 837–853 (SRLDVSVPRSRVLLSRS) the composition is skewed to low complexity. Basic residues predominate over residues 854–863 (SSRRRSRPSF).

In terms of assembly, homodimer. In terms of processing, there are 2 forms in macrophages, the membrane-binding proteins 200 kDa (MBP 200) and 235 kDa (MBP 235), that can be reduced into a single active ligand-binding species with intermediate mobility (MBP 200R). As to expression, highly expressed in spleen, lung and skeletal muscle, and weakly in brain, heart, kidney, and testis.

The protein resides in the cell membrane. Macrophage receptor that binds to the apolipoprotein B48 (APOB) of dietary triglyceride (TG)-rich lipoproteins (TRL) or to a like domain of APOB in hypertriglyceridemic very low density lipoprotein (HTG-VLDL). Binds and internalizes TRL when out of the context of the macrophage. May provide essential lipids to reticuloendothelial cells. Could also be involved in foam cell formation with elevated TRL and remnant lipoprotein (RLP). Mediates the rapid high-affinity uptake of chylomicrons (CM), HTG-VLDL, and trypsinized (tryp) VLDL devoid of APOE in vitro in macrophages. In Mus musculus (Mouse), this protein is Apolipoprotein B receptor.